The primary structure comprises 182 residues: Transmembrane and coiled-coil domain-containing protein 2 (182 aa).

2 helical membrane passes run 10–30 (IIID…TLLG) and 50–70 (VQVI…YALW). Positions 122-149 (GLQEKILKKLQTVENKVKDLEGMIISQK) form a coiled coil.

The protein localises to the membrane. This Bos taurus (Bovine) protein is Transmembrane and coiled-coil domain-containing protein 2 (TMCO2).